The sequence spans 253 residues: Sugar fermentation stimulation protein homolog (253 aa).

This sequence belongs to the SfsA family.

This chain is Sugar fermentation stimulation protein homolog, found in Chromohalobacter salexigens (strain ATCC BAA-138 / DSM 3043 / CIP 106854 / NCIMB 13768 / 1H11).